We begin with the raw amino-acid sequence, 493 residues long: Probable NADPH:adrenodoxin oxidoreductase, mitochondrial (493 aa).

FAD is bound by residues S26, E48, L56, and I100. NADP(+) is bound by residues 177–180 (NGNV), 223–224 (RR), and E235. FAD-binding positions include W407 and 414–416 (GVI). Position 414 (G414) interacts with NADP(+).

The protein belongs to the ferredoxin--NADP reductase type 1 family. The cofactor is FAD.

The protein resides in the mitochondrion inner membrane. It carries out the reaction 2 reduced [adrenodoxin] + NADP(+) + H(+) = 2 oxidized [adrenodoxin] + NADPH. In terms of biological role, adrenodoxin reductase transfers electrons from NADPH to adrenodoxin, which is involved in heme A biosynthesis and in iron-sulfur cluster assembly. Involved in the electron transfer to heme A synthase COX15, a heme protein that catalyzes the conversion of heme O to heme A. Required for the de novo synthesis of Fe-S clusters on iron sulfur cluster assembly protein ISU1. Involved in electron delivery for Fe-S cluster synthesis. Essential for coenzyme Q biosynthesis. May be involved in the electron transfer required for the hydroxylation reaction performed by COQ6. May play a role in cellular and mitochondrial iron homeostasis. In Saccharomyces cerevisiae (strain ATCC 204508 / S288c) (Baker's yeast), this protein is Probable NADPH:adrenodoxin oxidoreductase, mitochondrial.